The sequence spans 411 residues: Eukaryotic initiation factor 4A-III (411 aa).

The residue at position 1 (Met-1) is an N-acetylmethionine. The residue at position 2 (Ala-2) is an N-acetylalanine; in Eukaryotic initiation factor 4A-III, N-terminally processed. Ser-10 and Ser-12 each carry phosphoserine. Lys-19 participates in a covalent cross-link: Glycyl lysine isopeptide (Lys-Gly) (interchain with G-Cter in SUMO2). Residues 38–66 (PTFDTMGLREDLLRGIYAYGFEKPSAIQQ) carry the Q motif motif. ATP contacts are provided by residues Lys-60, Gln-65, and 85 to 90 (GTGKTA). The region spanning 69–239 (IKQIIKGRDV…NKFMTDPIRI (171 aa)) is the Helicase ATP-binding domain. Lys-124 carries the post-translational modification N6-acetyllysine. A Glycyl lysine isopeptide (Lys-Gly) (interchain with G-Cter in SUMO2) cross-link involves residue Lys-152. Thr-163 carries the post-translational modification Phosphothreonine. Positions 187–190 (DEAD) match the DEAD box motif. 2 positions are modified to N6-acetyllysine: Lys-198 and Lys-296. Residues 250–411 (GIKQFFVAVE…EMPMNVADLI (162 aa)) enclose the Helicase C-terminal domain. Lys-314 is covalently cross-linked (Glycyl lysine isopeptide (Lys-Gly) (interchain with G-Cter in SUMO2)). The residue at position 321 (Lys-321) is an N6-acetyllysine. ATP-binding positions include Asp-342 and 367-371 (RSGRY). Glycyl lysine isopeptide (Lys-Gly) (interchain with G-Cter in SUMO2) cross-links involve residues Lys-374 and Lys-382.

It belongs to the DEAD box helicase family. eIF4A subfamily. As to quaternary structure, identified in the spliceosome C complex. Core component of the mRNA splicing-dependent exon junction complex (EJC); the core complex contains CASC3, EIF4A3, MAGOH or MAGOHB, and RBM8A. Interacts with CASC3, MAGOH, NXF1, RBM8A and ALYREF/THOC4. Component of the ALYREF/THOC4-EJC-RNA complex; in the complex interacts with MAGOH, RBM8A and THOC4 (via the WXHD motif); these interactions are likely specific to RNA-bound EJC. May interact with NOM1. Interacts with POLDIP3. Interacts with CWC22 and PRPF19 in an RNA-independent manner. Direct interaction with CWC22 is mediated by the helicase C-terminal domain. Full interaction with CWC22 occurs only when EIF4A3 is not part of the EJC and prevents EIF4A3 binding to RNA. Identified in a complex composed of the EJC core, UPF3B and UPF2. The EJC core can also interact with UPF3A (in vitro). Interacts with NCBP3. Interacts with NRDE2. Interacts with DHX34; the interaction is RNA-independent.

Its subcellular location is the nucleus. It is found in the nucleus speckle. The protein localises to the cytoplasm. The catalysed reaction is ATP + H2O = ADP + phosphate + H(+). With respect to regulation, the ATPase activity is increased some 4-fold in the presence of RNA. Its function is as follows. ATP-dependent RNA helicase. Involved in pre-mRNA splicing as component of the spliceosome. Core component of the splicing-dependent multiprotein exon junction complex (EJC) deposited at splice junctions on mRNAs. The EJC is a dynamic structure consisting of core proteins and several peripheral nuclear and cytoplasmic associated factors that join the complex only transiently either during EJC assembly or during subsequent mRNA metabolism. The EJC marks the position of the exon-exon junction in the mature mRNA for the gene expression machinery and the core components remain bound to spliced mRNAs throughout all stages of mRNA metabolism thereby influencing downstream processes including nuclear mRNA export, subcellular mRNA localization, translation efficiency and nonsense-mediated mRNA decay (NMD). Its RNA-dependent ATPase and RNA-helicase activities are induced by CASC3, but abolished in presence of the MAGOH-RBM8A heterodimer, thereby trapping the ATP-bound EJC core onto spliced mRNA in a stable conformation. The inhibition of ATPase activity by the MAGOH-RBM8A heterodimer increases the RNA-binding affinity of the EJC. Involved in translational enhancement of spliced mRNAs after formation of the 80S ribosome complex. Binds spliced mRNA in sequence-independent manner, 20-24 nucleotides upstream of mRNA exon-exon junctions. Shows higher affinity for single-stranded RNA in an ATP-bound core EJC complex than after the ATP is hydrolyzed. Involved in the splicing modulation of BCL2L1/Bcl-X (and probably other apoptotic genes); specifically inhibits formation of proapoptotic isoforms; the function is different from the established EJC assembly. Involved in craniofacial development. The sequence is that of Eukaryotic initiation factor 4A-III (Eif4a3) from Mus musculus (Mouse).